A 621-amino-acid polypeptide reads, in one-letter code: Putative 5'-3' exonuclease R528 (621 aa).

This sequence belongs to the 5'-3' exonuclease family.

The protein resides in the virion. The sequence is that of Putative 5'-3' exonuclease R528 from Acanthamoeba polyphaga mimivirus (APMV).